The primary structure comprises 440 residues: ATP-dependent protease ATPase subunit HslU (440 aa).

Residues isoleucine 18, 60–65, aspartate 252, glutamate 318, and arginine 390 contribute to the ATP site; that span reads GVGKTE.

Belongs to the ClpX chaperone family. HslU subfamily. A double ring-shaped homohexamer of HslV is capped on each side by a ring-shaped HslU homohexamer. The assembly of the HslU/HslV complex is dependent on binding of ATP.

It localises to the cytoplasm. ATPase subunit of a proteasome-like degradation complex; this subunit has chaperone activity. The binding of ATP and its subsequent hydrolysis by HslU are essential for unfolding of protein substrates subsequently hydrolyzed by HslV. HslU recognizes the N-terminal part of its protein substrates and unfolds these before they are guided to HslV for hydrolysis. This Acidithiobacillus ferrooxidans (strain ATCC 23270 / DSM 14882 / CIP 104768 / NCIMB 8455) (Ferrobacillus ferrooxidans (strain ATCC 23270)) protein is ATP-dependent protease ATPase subunit HslU.